Here is a 610-residue protein sequence, read N- to C-terminus: ESX-5 secretion system protein EccA5 (610 aa).

Residue 357–364 (GPPGTGKT) coordinates ATP.

Belongs to the CbxX/CfxQ family. In terms of assembly, part of the ESX-5 / type VII secretion system (T7SS), which is composed of cytosolic and membrane components.

It is found in the cytoplasm. Part of an ESX-5 / type VII specialized secretion system (T7SS), which exports several proteins. EccA5 exhibits ATPase activity and may provide energy for the export of ESX-5 substrates. The sequence is that of ESX-5 secretion system protein EccA5 from Mycobacterium bovis (strain ATCC BAA-935 / AF2122/97).